Consider the following 331-residue polypeptide: Glutaminase (331 aa).

7 residues coordinate substrate: S77, N129, E173, N180, Y204, Y256, and V274.

This sequence belongs to the glutaminase family. Homotetramer.

The catalysed reaction is L-glutamine + H2O = L-glutamate + NH4(+). In Oceanobacillus iheyensis (strain DSM 14371 / CIP 107618 / JCM 11309 / KCTC 3954 / HTE831), this protein is Glutaminase.